A 223-amino-acid polypeptide reads, in one-letter code: MTSEVIEDEKQFYLKAKTYWKEVPPTVDGMLGGYGHISSIDISSSRKFLQRFLREGPNKTGTSCALDCGAGIGRITKRLLLPLFGVVDMVDVTEDFLIKARTYLGEEGKRVRNYFCCGLQDFSPEPNSYDVIWIQWVIGHLTDQHLAEFLRRCKQGLRPNGIIVIKDNMAQEGVILDDVDSSVCRDLDVVHRIVRSAGLSLLAEERQENLPDEIYHVYSLALR.

Met-1 is subject to N-acetylmethionine. Thr-2 is subject to N-acetylthreonine; in N-terminal Xaa-Pro-Lys N-methyltransferase 1, N-terminally processed. S-adenosyl-L-methionine-binding positions include Gly-69, Arg-74, 91–93 (DVT), 119–120 (LQ), and Gln-135.

It belongs to the methyltransferase superfamily. NTM1 family.

The protein resides in the nucleus. It carries out the reaction N-terminal L-alanyl-L-prolyl-L-lysyl-[protein] + 3 S-adenosyl-L-methionine = N-terminal N,N,N-trimethyl-L-alanyl-L-prolyl-L-lysyl-[protein] + 3 S-adenosyl-L-homocysteine + 3 H(+). The enzyme catalyses N-terminal L-seryl-L-prolyl-L-lysyl-[protein] + 3 S-adenosyl-L-methionine = N-terminal N,N,N-trimethyl-L-seryl-L-prolyl-L-lysyl-[protein] + 3 S-adenosyl-L-homocysteine + 3 H(+). The catalysed reaction is N-terminal L-prolyl-L-prolyl-L-lysyl-[protein] + 2 S-adenosyl-L-methionine = N-terminal N,N-dimethyl-L-prolyl-L-prolyl-L-lysyl-[protein] + 2 S-adenosyl-L-homocysteine + 2 H(+). Its function is as follows. Distributive alpha-N-methyltransferase that methylates the N-terminus of target proteins containing the N-terminal motif [Ala/Gly/Pro/Ser]-Pro-Lys when the initiator Met is cleaved. Specifically catalyzes mono-, di- or tri-methylation of the exposed alpha-amino group of the Ala, Gly or Ser residue in the [Ala/Gly/Ser]-Pro-Lys motif and mono- or di-methylation of Pro in the Pro-Pro-Lys motif. Some of the substrates may be primed by NTMT2-mediated monomethylation. Catalyzes the trimethylation of the N-terminal Gly in CENPA (after removal of Met-1). Responsible for the N-terminal methylation of KLHL31, MYL2, MYL3, RB1, RCC1, RPL23A and SET. Required during mitosis for normal bipolar spindle formation and chromosome segregation via its action on RCC1. The polypeptide is N-terminal Xaa-Pro-Lys N-methyltransferase 1 (NTMT1) (Ailuropoda melanoleuca (Giant panda)).